The sequence spans 258 residues: Imidazole glycerol phosphate synthase subunit HisF (258 aa).

Active-site residues include D12 and D131.

Belongs to the HisA/HisF family. In terms of assembly, heterodimer of HisH and HisF.

The protein localises to the cytoplasm. It carries out the reaction 5-[(5-phospho-1-deoxy-D-ribulos-1-ylimino)methylamino]-1-(5-phospho-beta-D-ribosyl)imidazole-4-carboxamide + L-glutamine = D-erythro-1-(imidazol-4-yl)glycerol 3-phosphate + 5-amino-1-(5-phospho-beta-D-ribosyl)imidazole-4-carboxamide + L-glutamate + H(+). Its pathway is amino-acid biosynthesis; L-histidine biosynthesis; L-histidine from 5-phospho-alpha-D-ribose 1-diphosphate: step 5/9. Its function is as follows. IGPS catalyzes the conversion of PRFAR and glutamine to IGP, AICAR and glutamate. The HisF subunit catalyzes the cyclization activity that produces IGP and AICAR from PRFAR using the ammonia provided by the HisH subunit. This is Imidazole glycerol phosphate synthase subunit HisF from Corynebacterium glutamicum (strain R).